Consider the following 308-residue polypeptide: Methionyl-tRNA formyltransferase (308 aa).

Residue 110-113 participates in (6S)-5,6,7,8-tetrahydrofolate binding; that stretch reads SLLP.

The protein belongs to the Fmt family.

The catalysed reaction is L-methionyl-tRNA(fMet) + (6R)-10-formyltetrahydrofolate = N-formyl-L-methionyl-tRNA(fMet) + (6S)-5,6,7,8-tetrahydrofolate + H(+). Its function is as follows. Attaches a formyl group to the free amino group of methionyl-tRNA(fMet). The formyl group appears to play a dual role in the initiator identity of N-formylmethionyl-tRNA by promoting its recognition by IF2 and preventing the misappropriation of this tRNA by the elongation apparatus. The sequence is that of Methionyl-tRNA formyltransferase from Neisseria meningitidis serogroup C / serotype 2a (strain ATCC 700532 / DSM 15464 / FAM18).